Here is a 216-residue protein sequence, read N- to C-terminus: Large ribosomal subunit protein uL3 (216 aa).

Gln157 carries the N5-methylglutamine modification.

This sequence belongs to the universal ribosomal protein uL3 family. Part of the 50S ribosomal subunit. Forms a cluster with proteins L14 and L19. Post-translationally, methylated by PrmB.

In terms of biological role, one of the primary rRNA binding proteins, it binds directly near the 3'-end of the 23S rRNA, where it nucleates assembly of the 50S subunit. This is Large ribosomal subunit protein uL3 from Xanthomonas axonopodis pv. citri (strain 306).